The chain runs to 663 residues: NAD(P)H-quinone oxidoreductase subunit 5, chloroplastic (663 aa).

16 helical membrane-spanning segments follow: residues 11 to 31 (WLIP…LISF), 41 to 61 (LYGL…MNLL), 89 to 109 (FFID…AVLV), 126 to 146 (FFAY…SPNL), 149 to 169 (IYIF…FWFT), 189 to 209 (FCLL…DFIT), 224 to 244 (HLYF…AKSA), 260 to 280 (TPIS…FLVA), 292 to 312 (IMNL…TIAL), 329 to 349 (LGYM…FHLV), 398 to 418 (FTFL…CFWS), 436 to 456 (IAWI…LLAF), 482 to 502 (LYML…GFIS), 528 to 548 (ILLN…AYSI), 607 to 627 (WLFD…GQSL), and 635 to 655 (VSSY…FLPL).

Belongs to the complex I subunit 5 family. NDH is composed of at least 16 different subunits, 5 of which are encoded in the nucleus.

The protein resides in the plastid. It localises to the chloroplast thylakoid membrane. The catalysed reaction is a plastoquinone + NADH + (n+1) H(+)(in) = a plastoquinol + NAD(+) + n H(+)(out). It carries out the reaction a plastoquinone + NADPH + (n+1) H(+)(in) = a plastoquinol + NADP(+) + n H(+)(out). Its function is as follows. NDH shuttles electrons from NAD(P)H:plastoquinone, via FMN and iron-sulfur (Fe-S) centers, to quinones in the photosynthetic chain and possibly in a chloroplast respiratory chain. The immediate electron acceptor for the enzyme in this species is believed to be plastoquinone. Couples the redox reaction to proton translocation, and thus conserves the redox energy in a proton gradient. This is NAD(P)H-quinone oxidoreductase subunit 5, chloroplastic (ndhF) from Chara vulgaris (Common stonewort).